The sequence spans 489 residues: Ribonuclease G (489 aa).

Residues 39-128 (GNIYKGRVSR…LTTDITLPSR (90 aa)) enclose the S1 motif domain. Mg(2+)-binding residues include Asp304 and Asp347.

The protein belongs to the RNase E/G family. RNase G subfamily. As to quaternary structure, homodimer, and possible higher multimers. Mg(2+) serves as cofactor.

The protein localises to the cytoplasm. Acts in the processing of the 5'-end of precursors of 16S rRNA. Confers adaptive resistance to aminoglycoside antibiotics through modulation of 16S rRNA processing. An endoribonuclease, it prefers 5'-monophosphorylated substrates and cleaves single-stranded sites rich in A and U residues; also contributes to 23S rRNA processing, tRNA processing and mRNA turnover. Involved in decay of speF mRNA, has a preference for adenine nucleotides. This Salmonella typhimurium (strain SL1344) protein is Ribonuclease G.